We begin with the raw amino-acid sequence, 309 residues long: tRNA pseudouridine synthase B (309 aa).

Catalysis depends on Asp39, which acts as the Nucleophile.

Belongs to the pseudouridine synthase TruB family. Type 1 subfamily.

It carries out the reaction uridine(55) in tRNA = pseudouridine(55) in tRNA. Its function is as follows. Responsible for synthesis of pseudouridine from uracil-55 in the psi GC loop of transfer RNAs. This chain is tRNA pseudouridine synthase B, found in Bacillus pumilus (strain SAFR-032).